A 242-amino-acid chain; its full sequence is MSNDYYLIIPAGGIGTRMHSEKDNINRKIKIAKQYLKLDNGLTILDQTLKILLNIDQIKGCIIALANKDYLFTKSKFNNHSKLITTVIGGKKRMNSVFNGLKALTNLAKDDDWILVHDSVRPCVKASEIINLMNQLKHHETGGLLATKVVDTIKQASNNIVNTTIDRSNLWQAQTPQMYRFGVLLKALNTVINDGMNITDEASAIEYLRLKSVLVKSSKSNIKITNSEDLELANFYLTQYKE.

The protein belongs to the IspD/TarI cytidylyltransferase family. IspD subfamily.

The catalysed reaction is 2-C-methyl-D-erythritol 4-phosphate + CTP + H(+) = 4-CDP-2-C-methyl-D-erythritol + diphosphate. It functions in the pathway isoprenoid biosynthesis; isopentenyl diphosphate biosynthesis via DXP pathway; isopentenyl diphosphate from 1-deoxy-D-xylulose 5-phosphate: step 2/6. Functionally, catalyzes the formation of 4-diphosphocytidyl-2-C-methyl-D-erythritol from CTP and 2-C-methyl-D-erythritol 4-phosphate (MEP). The chain is 2-C-methyl-D-erythritol 4-phosphate cytidylyltransferase from Vesicomyosocius okutanii subsp. Calyptogena okutanii (strain HA).